The sequence spans 304 residues: Pseudouridine-5'-phosphate glycosidase (304 aa).

Glutamate 25 functions as the Proton donor in the catalytic mechanism. Residues lysine 86 and valine 106 each contribute to the substrate site. Residue aspartate 138 coordinates Mn(2+). 140–142 serves as a coordination point for substrate; the sequence is SAD. Lysine 159 acts as the Nucleophile in catalysis.

This sequence belongs to the pseudouridine-5'-phosphate glycosidase family. In terms of assembly, homotrimer. Mn(2+) serves as cofactor.

It catalyses the reaction D-ribose 5-phosphate + uracil = psi-UMP + H2O. Catalyzes the reversible cleavage of pseudouridine 5'-phosphate (PsiMP) to ribose 5-phosphate and uracil. Functions biologically in the cleavage direction, as part of a pseudouridine degradation pathway. The protein is Pseudouridine-5'-phosphate glycosidase of Lysinibacillus sphaericus (strain C3-41).